The chain runs to 313 residues: Lactamase-like protein nscB (313 aa).

Zn(2+)-binding residues include His97, His99, Asp101, and His102. Asp101 functions as the Proton donor/acceptor in the catalytic mechanism.

The protein belongs to the metallo-beta-lactamase superfamily. Requires Zn(2+) as cofactor.

It participates in secondary metabolite biosynthesis. Functionally, lactamase-like protein; part of the gene cluster that mediates the biosynthesis of neosartoricin B, a prenylated anthracenone that probably exhibits T-cell antiproliferative activity, suggestive of a physiological role as an immunosuppressive agent. The non-reducing polyketide synthase nscA probably synthesizes and cyclizes the decaketide backbone. The hydrolase nscB then mediates the product release through hydrolysis followed by spontaneous decarboxylation. The prenyltransferase nscD catalyzes the addition of the dimethylallyl group to the aromatic C5. The FAD-dependent monooxygenase nscC is then responsible for the stereospecific hydroxylation at C2. Neosartoricin B can be converted into two additional compounds neosartoricins C and D. Neosartoricin C is a spirocyclic compound that is cyclized through the attack of C3 hydroxyl on C14, followed by dehydration. On the other hand, neosartoricin D is a further cyclized compound in which attack of C2 on C14 in neosartoricin C results in the formation of the acetal-containing dioxabicyclo-octanone ring. Both of these compounds are novel and possibly represent related metabolites of the gene cluster. The protein is Lactamase-like protein nscB of Arthroderma gypseum (strain ATCC MYA-4604 / CBS 118893) (Microsporum gypseum).